The sequence spans 398 residues: Phosphoglycerate kinase (398 aa).

Substrate-binding positions include 23-25 (DFN), Arg-38, 61-64 (HMGK), Arg-122, and Arg-155. ATP-binding positions include Lys-206, Gly-297, Glu-328, and 354–357 (GGDS).

Belongs to the phosphoglycerate kinase family. In terms of assembly, monomer.

It is found in the cytoplasm. The enzyme catalyses (2R)-3-phosphoglycerate + ATP = (2R)-3-phospho-glyceroyl phosphate + ADP. It functions in the pathway carbohydrate degradation; glycolysis; pyruvate from D-glyceraldehyde 3-phosphate: step 2/5. This Clostridium botulinum (strain Okra / Type B1) protein is Phosphoglycerate kinase.